Here is a 69-residue protein sequence, read N- to C-terminus: Intrepicalcin (69 aa).

Positions M1 to A27 are cleaved as a signal peptide. The propeptide occupies S28–R36. 3 cysteine pairs are disulfide-bonded: C39/C53, C46/C57, and C52/C68. The essential for stimulation of [3H]ryanodine binding to RYR1 stretch occupies residues R59–R60.

It belongs to the scorpion calcin family. Expressed by the venom gland.

The protein resides in the secreted. This toxin stabilizes ryanodine receptor 1 (RyR1) opening in a long-lasting subconductance state (55% of the full conductance state). Furthermore, it triggers calcium release from sarcoplasmic vesicles (45.3 nM are enough to induce a sharp release, and 50% of the total calcium is released after toxin (100 nM) addition) probably by acting as a cell-penetrating peptide (CPP). In addition, it has been shown to dose-dependently stimulate ryanodine binding to RyR1 (EC(50)=17.4 nM). It also augments the bell-shaped calcium-[3H]ryanodine binding curve that is maximal at about 10 uM calcium concentration. It binds a different site as ryanodine. It acts synergistically with caffeine. In vivo, intracerebroventricular injection into mice induces neurotoxic symptoms, followed by death. The chain is Intrepicalcin from Thorellius intrepidus (Scorpion).